Consider the following 434-residue polypeptide: Nicotinate phosphoribosyltransferase (434 aa).

Histidine 242 carries the post-translational modification Phosphohistidine; by autocatalysis.

It belongs to the NAPRTase family. Post-translationally, transiently phosphorylated on a His residue during the reaction cycle. Phosphorylation strongly increases the affinity for substrates and increases the rate of nicotinate D-ribonucleotide production. Dephosphorylation regenerates the low-affinity form of the enzyme, leading to product release.

The enzyme catalyses nicotinate + 5-phospho-alpha-D-ribose 1-diphosphate + ATP + H2O = nicotinate beta-D-ribonucleotide + ADP + phosphate + diphosphate. It functions in the pathway cofactor biosynthesis; NAD(+) biosynthesis; nicotinate D-ribonucleotide from nicotinate: step 1/1. Functionally, catalyzes the synthesis of beta-nicotinate D-ribonucleotide from nicotinate and 5-phospho-D-ribose 1-phosphate at the expense of ATP. The sequence is that of Nicotinate phosphoribosyltransferase from Rhizobium etli (strain CIAT 652).